The chain runs to 1267 residues: Eukaryotic translation initiation factor 3 subunit A (1267 aa).

Residues 82–118 (NIKSLEDVVRAYLKLAEEKTETAKEESQQMVLDIEDL) adopt a coiled-coil conformation. Residues 315 to 498 (MQRMSTRVLL…RTLSFGSDLN (184 aa)) form the PCI domain. Composition is skewed to basic and acidic residues over residues 792–835 (EERK…LEQE), 844–1086 (YQER…DSRP), and 1098–1147 (WRER…EGSA). Residues 792 to 1267 (EERKKQRKED…DDDGWTTVRR (476 aa)) are disordered. 3 repeat units span residues 956 to 965 (DDDRGPRRGG), 966 to 975 (DDERPPRRGF), and 976 to 985 (DDDRGTRRGF). Positions 956-1073 (DDDRGPRRGG…DDERGGRRGM (118 aa)) are 12 X 10 AA approximate tandem repeats of D-[DE]-[DE]-R-[GP]-[GPQT]-R-R-[GPS]-[ADFGIM]. One copy of the 4; truncated repeat lies at 986–994 (DDDRGQRRG). Repeat copies occupy residues 995 to 1004 (DDDRGPRRGM) and 1005 to 1014 (DDDRGPRRPI). Residues 1015–1023 (DDDRGPRRS) form a 7; truncated repeat. Tandem repeats lie at residues 1024–1033 (DDDRGPRRGF) and 1034–1043 (DDDRGPRRGM). The stretch at 1044-1053 (DEPRGPRRGA) is one 10; approximate repeat. The stretch at 1054–1063 (DDDWGPRRGG) is repeat 11. One copy of the 12; approximate repeat lies at 1064-1073 (DDERGGRRGM). Positions 1150–1159 (RGGGGGGGGE) are enriched in gly residues. Basic and acidic residues predominate over residues 1162 to 1256 (SSWRDSRRED…KENPRRTKNE (95 aa)).

It belongs to the eIF-3 subunit A family. As to quaternary structure, component of the eukaryotic translation initiation factor 3 (eIF-3) complex, which is composed of 13 subunits: eif3a, eif3b, eif3c, eif3d, eif3e, eif3f, eif3g, eif3h, eif3i, eif3j, eif3k, eif3l and eif3m.

Its subcellular location is the cytoplasm. RNA-binding component of the eukaryotic translation initiation factor 3 (eIF-3) complex, which is involved in protein synthesis of a specialized repertoire of mRNAs and, together with other initiation factors, stimulates binding of mRNA and methionyl-tRNAi to the 40S ribosome. The eIF-3 complex specifically targets and initiates translation of a subset of mRNAs involved in cell proliferation. The protein is Eukaryotic translation initiation factor 3 subunit A (eif3a) of Danio rerio (Zebrafish).